We begin with the raw amino-acid sequence, 108 residues long: Class I hydrophobin 3 (108 aa).

Positions 1-17 (MFFQTTIVAALASLAVA) are cleaved as a signal peptide. 4 disulfides stabilise this stretch: cysteine 28–cysteine 87, cysteine 35–cysteine 81, cysteine 36–cysteine 69, and cysteine 88–cysteine 101. N-linked (GlcNAc...) asparagine glycosylation occurs at asparagine 37.

It belongs to the fungal hydrophobin family. Self-assembles to form functional amyloid fibrils called rodlets. Self-assembly into fibrillar rodlets occurs spontaneously at hydrophobic:hydrophilic interfaces and the rodlets further associate laterally to form amphipathic monolayers.

The protein localises to the secreted. The protein resides in the cell wall. In terms of biological role, aerial growth, conidiation, and dispersal of filamentous fungi in the environment rely upon a capability of their secreting small amphipathic proteins called hydrophobins (HPBs) with low sequence identity. Class I can self-assemble into an outermost layer of rodlet bundles on aerial cell surfaces, conferring cellular hydrophobicity that supports fungal growth, development and dispersal; whereas Class II form highly ordered films at water-air interfaces through intermolecular interactions but contribute nothing to the rodlet structure. Vmh3 is a class I hydrophobin that is essential for the maintenance of the surface hydrophobicity of the mycelium and might be involved in the development of fruiting bodies. Plays an important role in hyphal resistance against environmental stress. Necessary for the efficient biodegradation of lignin. This is Class I hydrophobin 3 from Pleurotus ostreatus (strain PC15) (Oyster mushroom).